The sequence spans 456 residues: MGLFTDLVLYGIVLPALPFIMRNRFHIPNAELQHYTSGFLATYAGASVFFSVPAGWAASKLGSRQLFLGGLVFLFVATAIFAFSTSLALLVVSRLLQGMSTAVVWTAGLDMVQDTVDPSQIGVTIGTIFATISVGELAAPVLGGVLYERGGIAAVFAVSAVMLAIDLGLRGLVIDKKAAVKFESPCLIRSSAERSDHVASAPTVVEAQERTHEGTPLLPQDDDDDSDRYKIDRELGSIVQAIPLLYCFREPRLHLAMLLSFVQALFIGTFDATVPTEAESLFHFSSLQVGLVFIALMLPYFALGRLAGQAVDRFGTKAAATSGYAFLVPCLLLLGLPEKKLVSKEANVALFCTILALNGIGLAVVTSPGYVEAIDVTTKYQVANPGHFGENGPYAQLFGFSSLYFFTGLAVGPLLGGVLRAKFGYAVMGAVYAAISGVTAIVSFLFVGTRRGVCWG.

The next 5 membrane-spanning stretches (helical) occupy residues 1–21 (MGLF…PFIM), 38–58 (GFLA…GWAA), 72–92 (VFLF…LLVV), 125–145 (IGTI…LGGV), and 154–174 (AVFA…GLVI). Residues 206-225 (EAQERTHEGTPLLPQDDDDD) are disordered. 6 helical membrane-spanning segments follow: residues 255–275 (LAML…ATVP), 284–304 (FSSL…FALG), 318–338 (AAAT…GLPE), 348–368 (VALF…VTSP), 398–418 (FGFS…LGGV), and 427–447 (VMGA…FLFV).

Belongs to the major facilitator superfamily. TCR/Tet family.

It localises to the membrane. MFS-type transporter; part of the gene cluster that mediates the biosynthesis of pyrrolopyrazines, secondary metabolites showing insecticidal activity. Probably involved in the secretion of peramine and other pyrrolopyrazines. The chain is MFS-type transporter ppzB (ppzB) from Metarhizium majus (strain ARSEF 297).